Reading from the N-terminus, the 333-residue chain is Ketol-acid reductoisomerase (NADP(+)) (333 aa).

In terms of domain architecture, KARI N-terminal Rossmann spans 1 to 181 (MKVYYDQDAD…GGARSGVIET (181 aa)). Residues 24–27 (YGSQ), Arg47, and 82–85 (DEVQ) contribute to the NADP(+) site. Residue His107 is part of the active site. NADP(+) is bound at residue Gly133. In terms of domain architecture, KARI C-terminal knotted spans 182–327 (TFREETETDL…KELRSMMPWL (146 aa)). 4 residues coordinate Mg(2+): Asp190, Glu194, Glu226, and Glu230. Residue Ser251 coordinates substrate.

It belongs to the ketol-acid reductoisomerase family. Requires Mg(2+) as cofactor.

It carries out the reaction (2R)-2,3-dihydroxy-3-methylbutanoate + NADP(+) = (2S)-2-acetolactate + NADPH + H(+). The enzyme catalyses (2R,3R)-2,3-dihydroxy-3-methylpentanoate + NADP(+) = (S)-2-ethyl-2-hydroxy-3-oxobutanoate + NADPH + H(+). The protein operates within amino-acid biosynthesis; L-isoleucine biosynthesis; L-isoleucine from 2-oxobutanoate: step 2/4. It functions in the pathway amino-acid biosynthesis; L-valine biosynthesis; L-valine from pyruvate: step 2/4. Involved in the biosynthesis of branched-chain amino acids (BCAA). Catalyzes an alkyl-migration followed by a ketol-acid reduction of (S)-2-acetolactate (S2AL) to yield (R)-2,3-dihydroxy-isovalerate. In the isomerase reaction, S2AL is rearranged via a Mg-dependent methyl migration to produce 3-hydroxy-3-methyl-2-ketobutyrate (HMKB). In the reductase reaction, this 2-ketoacid undergoes a metal-dependent reduction by NADPH to yield (R)-2,3-dihydroxy-isovalerate. This Desulfovibrio desulfuricans (strain ATCC 27774 / DSM 6949 / MB) protein is Ketol-acid reductoisomerase (NADP(+)).